Here is a 431-residue protein sequence, read N- to C-terminus: Adenylosuccinate lyase (431 aa).

Residues R4–Y5, N67–D69, and T93–S94 each bind N(6)-(1,2-dicarboxyethyl)-AMP. H141 acts as the Proton donor/acceptor in catalysis. A N(6)-(1,2-dicarboxyethyl)-AMP-binding site is contributed by Q212. Residue S262 is the Proton donor/acceptor of the active site. Residues S263, K268–N270, and S307–Y311 contribute to the N(6)-(1,2-dicarboxyethyl)-AMP site.

This sequence belongs to the lyase 1 family. Adenylosuccinate lyase subfamily. Homotetramer. Residues from neighboring subunits contribute catalytic and substrate-binding residues to each active site.

The enzyme catalyses N(6)-(1,2-dicarboxyethyl)-AMP = fumarate + AMP. It catalyses the reaction (2S)-2-[5-amino-1-(5-phospho-beta-D-ribosyl)imidazole-4-carboxamido]succinate = 5-amino-1-(5-phospho-beta-D-ribosyl)imidazole-4-carboxamide + fumarate. Its pathway is purine metabolism; AMP biosynthesis via de novo pathway; AMP from IMP: step 2/2. The protein operates within purine metabolism; IMP biosynthesis via de novo pathway; 5-amino-1-(5-phospho-D-ribosyl)imidazole-4-carboxamide from 5-amino-1-(5-phospho-D-ribosyl)imidazole-4-carboxylate: step 2/2. Functionally, catalyzes two reactions in de novo purine nucleotide biosynthesis. Catalyzes the breakdown of 5-aminoimidazole- (N-succinylocarboxamide) ribotide (SAICAR or 2-[5-amino-1-(5-phospho-beta-D-ribosyl)imidazole-4-carboxamido]succinate) to 5-aminoimidazole-4-carboxamide ribotide (AICAR or 5-amino-1-(5-phospho-beta-D-ribosyl)imidazole-4-carboxamide) and fumarate, and of adenylosuccinate (ADS or N(6)-(1,2-dicarboxyethyl)-AMP) to adenosine monophosphate (AMP) and fumarate. The polypeptide is Adenylosuccinate lyase (purB) (Thermotoga maritima (strain ATCC 43589 / DSM 3109 / JCM 10099 / NBRC 100826 / MSB8)).